We begin with the raw amino-acid sequence, 460 residues long: Argininosuccinate lyase (460 aa).

This sequence belongs to the lyase 1 family. Argininosuccinate lyase subfamily.

It localises to the cytoplasm. It carries out the reaction 2-(N(omega)-L-arginino)succinate = fumarate + L-arginine. It functions in the pathway amino-acid biosynthesis; L-arginine biosynthesis; L-arginine from L-ornithine and carbamoyl phosphate: step 3/3. This Lacticaseibacillus paracasei (strain ATCC 334 / BCRC 17002 / CCUG 31169 / CIP 107868 / KCTC 3260 / NRRL B-441) (Lactobacillus paracasei) protein is Argininosuccinate lyase.